Here is a 148-residue protein sequence, read N- to C-terminus: Nucleoside diphosphate kinase (148 aa).

Positions 9, 57, 85, 91, 102, and 112 each coordinate ATP. Residue histidine 115 is the Pros-phosphohistidine intermediate of the active site.

Belongs to the NDK family. In terms of assembly, homotetramer. Mg(2+) is required as a cofactor.

It is found in the cytoplasm. It carries out the reaction a 2'-deoxyribonucleoside 5'-diphosphate + ATP = a 2'-deoxyribonucleoside 5'-triphosphate + ADP. The enzyme catalyses a ribonucleoside 5'-diphosphate + ATP = a ribonucleoside 5'-triphosphate + ADP. Major role in the synthesis of nucleoside triphosphates other than ATP. The ATP gamma phosphate is transferred to the NDP beta phosphate via a ping-pong mechanism, using a phosphorylated active-site intermediate. This chain is Nucleoside diphosphate kinase, found in Macrococcus caseolyticus (strain JCSC5402) (Macrococcoides caseolyticum).